The chain runs to 329 residues: NADH-quinone oxidoreductase subunit H (329 aa).

9 helical membrane passes run Leu-9–Ile-29, Gly-42–Phe-62, Phe-75–Ile-95, Ile-117–Gly-137, Ile-154–Val-174, Gly-188–Ala-208, Leu-238–Ile-258, Trp-269–Trp-291, and Trp-309–Ile-329.

The protein belongs to the complex I subunit 1 family. NDH-1 is composed of 14 different subunits. Subunits NuoA, H, J, K, L, M, N constitute the membrane sector of the complex.

The protein resides in the cell inner membrane. It carries out the reaction a quinone + NADH + 5 H(+)(in) = a quinol + NAD(+) + 4 H(+)(out). Functionally, NDH-1 shuttles electrons from NADH, via FMN and iron-sulfur (Fe-S) centers, to quinones in the respiratory chain. The immediate electron acceptor for the enzyme in this species is believed to be ubiquinone. Couples the redox reaction to proton translocation (for every two electrons transferred, four hydrogen ions are translocated across the cytoplasmic membrane), and thus conserves the redox energy in a proton gradient. This subunit may bind ubiquinone. This is NADH-quinone oxidoreductase subunit H from Helicobacter pylori (strain J99 / ATCC 700824) (Campylobacter pylori J99).